The following is a 468-amino-acid chain: Meiotically up-regulated gene 111 protein (468 aa).

The next 12 helical transmembrane spans lie at 13 to 33 (LVLI…NSVT), 59 to 79 (IVSA…VPFY), 92 to 112 (VFTT…SILY), 116 to 136 (FPTC…ISGT), 158 to 178 (IVVL…LGSI), 190 to 210 (LISW…AVFF), 285 to 305 (PIPI…FFDI), 330 to 350 (FGSL…GFSV), 356 to 376 (TMLI…FATA), 382 to 402 (LALF…LVAA), 417 to 437 (ALLE…AFIV), and 446 to 466 (FFIG…LLLG).

Its subcellular location is the membrane. Functionally, has a role in meiosis. The protein is Meiotically up-regulated gene 111 protein (mug111) of Schizosaccharomyces pombe (strain 972 / ATCC 24843) (Fission yeast).